Consider the following 504-residue polypeptide: Pup--protein ligase (504 aa).

Glu30 is a Mg(2+) binding site. Arg74 is an ATP binding site. Tyr76 is a Mg(2+) binding site. Residue Asp78 is the Proton acceptor of the active site. Glu84 is a binding site for Mg(2+). ATP contacts are provided by Thr87 and Trp459.

Belongs to the Pup ligase/Pup deamidase family. Pup-conjugating enzyme subfamily.

The enzyme catalyses ATP + [prokaryotic ubiquitin-like protein]-L-glutamate + [protein]-L-lysine = ADP + phosphate + N(6)-([prokaryotic ubiquitin-like protein]-gamma-L-glutamyl)-[protein]-L-lysine.. It functions in the pathway protein degradation; proteasomal Pup-dependent pathway. It participates in protein modification; protein pupylation. Catalyzes the covalent attachment of the prokaryotic ubiquitin-like protein modifier Pup to the proteasomal substrate proteins, thereby targeting them for proteasomal degradation. This tagging system is termed pupylation. The ligation reaction involves the side-chain carboxylate of the C-terminal glutamate of Pup and the side-chain amino group of a substrate lysine. The chain is Pup--protein ligase from Corynebacterium urealyticum (strain ATCC 43042 / DSM 7109).